The following is a 603-amino-acid chain: Golgin subfamily A member 8B (603 aa).

4 disordered regions span residues 1-82, 95-125, 398-419, and 460-492; these read MAEE…NSRS, LKQQKKQVEHQLEEEKKANNEKQKAERELEG, TSAEKEPEAAVPASGTGGESSG, and PGDSAKDASPGGGHHQAGPGQGGEEGEAAGAAG. The span at 46–66 shows a compositional bias: low complexity; sequence AASGGCHSSEASSSASSSLHA. Residues 69 to 82 are compositionally biased toward polar residues; sequence SPCQEQAAVLNSRS. Coiled-coil stretches lie at residues 82–173 and 212–440; these read SIKI…GELE and LKGH…LELG. Basic and acidic residues predominate over residues 100–124; it reads KQVEHQLEEEKKANNEKQKAERELE. Gly residues predominate over residues 469–482; the sequence is PGGGHHQAGPGQGG. A golgi-targeting domain region spans residues 491–603; the sequence is AGDGVAACGS…CWAWLPRRRR (113 aa).

Belongs to the GOLGA8 family. As to expression, highly expressed in brain, heart and kidney. Detected at lower levels in liver, thymus, spleen, lung and peripheral blood leukocytes.

The protein localises to the golgi apparatus. It is found in the golgi stack membrane. Functionally, may be involved in maintaining Golgi structure. The protein is Golgin subfamily A member 8B (GOLGA8B) of Homo sapiens (Human).